The sequence spans 423 residues: ATP-dependent RNA helicase RhlB (423 aa).

Positions 9-37 match the Q motif motif; it reads LRFSDLPLHHQVLAALQEKGFDYCTPIQA. Positions 40–217 constitute a Helicase ATP-binding domain; the sequence is LPMSLAGKDV…FEDMNDPEYV (178 aa). 53–60 contacts ATP; that stretch reads AQTGTGKT. Positions 163–166 match the DEAD box motif; that stretch reads DEAD. A Helicase C-terminal domain is found at 241 to 388; the sequence is KMALLLTLLE…VSQYDVAALL (148 aa). Residues 397–423 form a disordered region; sequence KRGNNNSKNSANSNRTFQKKRSLKRNF. Over residues 400–410 the composition is skewed to low complexity; it reads NNNSKNSANSN. Basic residues predominate over residues 413-423; that stretch reads FQKKRSLKRNF.

The protein belongs to the DEAD box helicase family. RhlB subfamily. As to quaternary structure, component of the RNA degradosome, which is a multiprotein complex involved in RNA processing and mRNA degradation.

Its subcellular location is the cytoplasm. It carries out the reaction ATP + H2O = ADP + phosphate + H(+). In terms of biological role, DEAD-box RNA helicase involved in RNA degradation. Has RNA-dependent ATPase activity and unwinds double-stranded RNA. The polypeptide is ATP-dependent RNA helicase RhlB (Pasteurella multocida (strain Pm70)).